A 123-amino-acid chain; its full sequence is Small ribosomal subunit protein uS12 (123 aa).

D89 bears the 3-methylthioaspartic acid mark. The disordered stretch occupies residues 101 to 123 (TLDTSGVSDRRQSRSKYGAKRPK). A compositionally biased stretch (basic residues) spans 113-123 (SRSKYGAKRPK).

This sequence belongs to the universal ribosomal protein uS12 family. Part of the 30S ribosomal subunit. Contacts proteins S8 and S17. May interact with IF1 in the 30S initiation complex.

Functionally, with S4 and S5 plays an important role in translational accuracy. Its function is as follows. Interacts with and stabilizes bases of the 16S rRNA that are involved in tRNA selection in the A site and with the mRNA backbone. Located at the interface of the 30S and 50S subunits, it traverses the body of the 30S subunit contacting proteins on the other side and probably holding the rRNA structure together. The combined cluster of proteins S8, S12 and S17 appears to hold together the shoulder and platform of the 30S subunit. In Solidesulfovibrio magneticus (strain ATCC 700980 / DSM 13731 / RS-1) (Desulfovibrio magneticus), this protein is Small ribosomal subunit protein uS12.